A 165-amino-acid chain; its full sequence is Large ribosomal subunit protein uL5 (165 aa).

Belongs to the universal ribosomal protein uL5 family. Part of the 50S ribosomal subunit; contacts the 5S rRNA and probably tRNA. Forms a bridge to the 30S subunit in the 70S ribosome.

Its function is as follows. This is one of the proteins that bind and probably mediate the attachment of the 5S RNA into the large ribosomal subunit, where it forms part of the central protuberance. In the 70S ribosome it contacts protein S13 of the 30S subunit (bridge B1b), connecting the 2 subunits; this bridge is implicated in subunit movement. May contact the P site tRNA; the 5S rRNA and some of its associated proteins might help stabilize positioning of ribosome-bound tRNAs. This is Large ribosomal subunit protein uL5 from Methanosarcina acetivorans (strain ATCC 35395 / DSM 2834 / JCM 12185 / C2A).